We begin with the raw amino-acid sequence, 787 residues long: MISTRLARAGALAPKSRLFLGTRAFATVGDSPLDKKVEMANTEKGNYINYKKMSENLDIVRRRLQRPLTYAEKVLYSHLDDPHGQEIERGKSYLKLRPDRVACQDATAQMAILQFMSAGMPSVATPTTVHCDHLIEAQVGGDKDLARANEINKEVYDFLASATAKYNIGFWKPGSGIIHQIVLENYAFPGGLMIGTDSHTPNAGGLAMAAIGVGGADAVDVMAGLPWELKAPKVIGVKLTGEMSGWTTPKDVILKVAGLLTVKGGTGAIIEYHGPGVTSLSCTGMGTICNMGAEIGATTSMFPFNDRMYDYLKATKRQHIGDFAREYAKELREDEGAEYDQLIEINLSELEPHINGPFTPDLATPISKFKEAVETNKWPEELKVGLIGSCTNSSYEDMSRAASIARDALNHGLKAKSLFTVTPGSEQIRATIERDGQLQTLEEFGGVILANACGPCIGQWDRRDVKKGEPNSIISSYNRNFTGRNDANPATHAFVASPDLVVAMTIAGTLKFNPLTDKLKDKDGNEFLLQPPTGEGLPAKGYDPGRDTYQAPPADRSSVNVAVSPTSDRLQLLAGFEPWDGKDANGIPILIKCQGKTTTDHISMAGPWLKYRGHLDNISNNMLIGAVNAENGKANSVKNKFTGEYDAVPATARDYKARGVKWVVIGDWNYGEGSSREHAALEPRHLGGLAIITRSFARIHETNLKKQGMLPLTFADPADYDKINPEDTVDLLCTQLEVGKPMTLRVHPKDGSAPFDISLNHTFNESQIEWFKDGSALNTMARKSGAK.

The N-terminal 33 residues, 1–33, are a transit peptide targeting the mitochondrion; it reads MISTRLARAGALAPKSRLFLGTRAFATVGDSPL. Substrate contacts are provided by residues Q104 and 197-199; that span reads DSH. Positions 390, 453, and 456 each coordinate [4Fe-4S] cluster. Substrate-binding residues include R479 and R484. Residues 529–559 are disordered; it reads LQPPTGEGLPAKGYDPGRDTYQAPPADRSSV. Residues R612 and 675 to 676 contribute to the substrate site; that span reads SR.

Belongs to the aconitase/IPM isomerase family. The cofactor is [4Fe-4S] cluster.

It is found in the mitochondrion. The enzyme catalyses citrate = D-threo-isocitrate. It carries out the reaction (2R)-homocitrate = cis-homoaconitate + H2O. The protein operates within carbohydrate metabolism; tricarboxylic acid cycle; isocitrate from oxaloacetate: step 2/2. Its pathway is amino-acid biosynthesis; L-lysine biosynthesis via AAA pathway; L-alpha-aminoadipate from 2-oxoglutarate: step 2/5. Catalyzes the isomerization of citrate to isocitrate via cis-aconitate, a step in the citric acid cycle. Also catalyzes the reversible dehydration of (R)-homocitrate to cis-homoaconitate, a step in the alpha-aminoadipate pathway for lysine biosynthesis. This is Aconitate hydratase, mitochondrial (acoA) from Aspergillus fumigatus (strain ATCC MYA-4609 / CBS 101355 / FGSC A1100 / Af293) (Neosartorya fumigata).